Reading from the N-terminus, the 101-residue chain is Small ribosomal subunit protein uS14 (101 aa).

It belongs to the universal ribosomal protein uS14 family. As to quaternary structure, part of the 30S ribosomal subunit. Contacts proteins S3 and S10.

In terms of biological role, binds 16S rRNA, required for the assembly of 30S particles and may also be responsible for determining the conformation of the 16S rRNA at the A site. The protein is Small ribosomal subunit protein uS14 of Burkholderia multivorans (strain ATCC 17616 / 249).